The sequence spans 425 residues: Endoplasmic reticulum junction formation protein lunapark (425 aa).

Residue Gly2 is the site of N-myristoyl glycine attachment. Topologically, residues 2–45 (GGLFSRWRAKPSTVEVLENIDKEIQALEEFREKNQRLQKLWVGR) are cytoplasmic. Positions 15-41 (VEVLENIDKEIQALEEFREKNQRLQKL) form a coiled coil. Residues 46-66 (LIIYSSILYLFTCLIVYLWYL) traverse the membrane as a helical segment. The Lumenal portion of the chain corresponds to 67-77 (PDEFTARLVMT). Residues 78–98 (LPFFAFPLIIWTLRTVLIFFF) form a helical membrane-spanning segment. Over 99-425 (SKRTERNNEA…EPSEESLVTK (327 aa)) the chain is Cytoplasmic. Residues 101 to 128 (RTERNNEALDDLKSQKKKILEEVMEKET) are a coiled coil. 5 positions are modified to phosphoserine: Ser114, Ser153, Ser177, Ser182, and Ser194. Positions 144-242 (KKAKEFEPPS…HPPGPPLARP (99 aa)) are disordered. The segment covering 186-195 (GPPPQGPVSP) has biased composition (pro residues). Residue Thr211 is modified to Phosphothreonine. Ser222 is subject to Phosphoserine. The C4-type; plays a role in ER morphology zinc finger occupies 271 to 296 (CQQCFSHNGMALKEEFEYIAFRCAYC). 3 positions are modified to phosphoserine: Ser316, Ser348, and Ser380. The interval 320–425 (RQAVEGSSST…EPSEESLVTK (106 aa)) is disordered. Positions 384–398 (EPAENQEETENEETS) are enriched in acidic residues. At Ser411 the chain carries Phosphoserine.

This sequence belongs to the lunapark family. As to quaternary structure, homodimer; homodimerization requires the C4-type zinc finger motif and decreases during mitosis in a phosphorylation-dependent manner. In terms of processing, myristoylated; myristoylation is necessary for the endoplasmic reticulum (ER) three-way ER tubular junction formation, but is not required neither for membrane translocation, membrane topology formation, nor for the specific localization to ER membranes. Post-translationally, phosphorylated. Phosphorylation occurs at Ser-177, Ser-182, Ser-222, Ser-316 and Ser-380 during interphase. Phosphorylation occurs at Ser-114, Ser-153, Ser-194, Thr-211 and Ser-348 during mitosis; these phosphorylations reduce both its homodimerization and the ER three-way tubular junction formation. Subject to proteasomal degradation following phosphorylation during mitosis. In terms of tissue distribution, expressed in most tissues at basal level, with reinforcement in distal limb buds, genital bud, and in parts of the central nervous system.

It localises to the endoplasmic reticulum membrane. Endoplasmic reticulum (ER)-shaping membrane protein that plays a role in determining ER morphology. Involved in the stabilization of nascent three-way ER tubular junctions within the ER network. May also play a role as a curvature-stabilizing protein within three-way ER tubular junction network. May be involved in limb and central nervous system development. This is Endoplasmic reticulum junction formation protein lunapark from Mus musculus (Mouse).